A 128-amino-acid chain; its full sequence is MALSKEEILQAIEEMKVIELHELVEAIKEKFNVTAAMPVAAVAAAPAGGAAAPAEEEKNEFDIILTGFDAAQKIALIKEVRAVSGLGLKEAKDAVEKGGETIKSGVSKEEAAAIKKQLEAAGGKVEVK.

It belongs to the bacterial ribosomal protein bL12 family. Homodimer. Part of the ribosomal stalk of the 50S ribosomal subunit. Forms a multimeric L10(L12)X complex, where L10 forms an elongated spine to which 2 to 4 L12 dimers bind in a sequential fashion. Binds GTP-bound translation factors.

In terms of biological role, forms part of the ribosomal stalk which helps the ribosome interact with GTP-bound translation factors. Is thus essential for accurate translation. In Brachyspira hyodysenteriae (strain ATCC 49526 / WA1), this protein is Large ribosomal subunit protein bL12.